Reading from the N-terminus, the 426-residue chain is D-tagatose-1,6-bisphosphate aldolase subunit KbaZ (426 aa).

This sequence belongs to the GatZ/KbaZ family. KbaZ subfamily. In terms of assembly, forms a complex with KbaY.

It functions in the pathway carbohydrate metabolism; D-tagatose 6-phosphate degradation; D-glyceraldehyde 3-phosphate and glycerone phosphate from D-tagatose 6-phosphate: step 2/2. Its function is as follows. Component of the tagatose-1,6-bisphosphate aldolase KbaYZ that is required for full activity and stability of the Y subunit. Could have a chaperone-like function for the proper and stable folding of KbaY. When expressed alone, KbaZ does not show any aldolase activity. The sequence is that of D-tagatose-1,6-bisphosphate aldolase subunit KbaZ from Escherichia coli O81 (strain ED1a).